The chain runs to 103 residues: Histone H4 (103 aa).

Gly residues predominate over residues 1-14 (MSGRGKGGKGLGKG). The segment at 1-20 (MSGRGKGGKGLGKGGAKRHR) is disordered. Ser2 carries the N-acetylserine modification. N6-acetyl-N6-methyllysine; alternate occurs at positions 6 and 13. The residue at position 17 (Lys17) is an N6-acetyllysine. A DNA-binding region spans residues 17–21 (KRHRK). N6-methyllysine is present on Lys21.

This sequence belongs to the histone H4 family. In terms of assembly, the nucleosome is a histone octamer containing two molecules each of H2A, H2B, H3 and H4 assembled in one H3-H4 heterotetramer and two H2A-H2B heterodimers. The octamer wraps approximately 147 bp of DNA.

It is found in the nucleus. Its subcellular location is the chromosome. Functionally, core component of nucleosome. Nucleosomes wrap and compact DNA into chromatin, limiting DNA accessibility to the cellular machineries which require DNA as a template. Histones thereby play a central role in transcription regulation, DNA repair, DNA replication and chromosomal stability. DNA accessibility is regulated via a complex set of post-translational modifications of histones, also called histone code, and nucleosome remodeling. The sequence is that of Histone H4 from Holothuria tubulosa (Tubular sea cucumber).